The primary structure comprises 1451 residues: DNA polymerase III PolC-type (1451 aa).

Residues F416–F575 enclose the Exonuclease domain.

Belongs to the DNA polymerase type-C family. PolC subfamily.

It localises to the cytoplasm. It carries out the reaction DNA(n) + a 2'-deoxyribonucleoside 5'-triphosphate = DNA(n+1) + diphosphate. Functionally, required for replicative DNA synthesis. This DNA polymerase also exhibits 3' to 5' exonuclease activity. In Mycoplasma genitalium (strain ATCC 33530 / DSM 19775 / NCTC 10195 / G37) (Mycoplasmoides genitalium), this protein is DNA polymerase III PolC-type.